A 514-amino-acid chain; its full sequence is uncharacterized protein (514 aa).

3 disordered regions span residues 1 to 68 (MSSP…SESE), 109 to 244 (VPPP…RQAS), and 272 to 484 (RPAV…AQGC). The span at 368 to 384 (KPQKPKHSSPGKKPAGR) shows a compositional bias: basic residues. The segment covering 385 to 405 (KTRESQAAAREDNDPNRDEVP) has biased composition (basic and acidic residues).

This is an uncharacterized protein from Homo sapiens (Human).